The following is a 331-amino-acid chain: Homeobox protein DBX1 (331 aa).

2 disordered regions span residues 56–94 (RAVP…ISSN) and 232–331 (KERE…ITVS). Residues 173-232 (GMLRRAVFSDVQRKALEKMFQKQKYISKPDRKKLAGKLGLKDSQVKIWFQNRRMKWRNSK) constitute a DNA-binding region (homeobox). Positions 256-266 (DLSDVSKKSSG) are enriched in basic and acidic residues. The span at 299–314 (PSSPFNSSSASKPSDF) shows a compositional bias: low complexity. The span at 315–331 (SDSEEEGGEQEEEITVS) shows a compositional bias: acidic residues.

The protein belongs to the H2.0 homeobox family.

The protein resides in the nucleus. Its function is as follows. May function within the midpoint progenitor population to inhibit neuronal differentiation, possibly through modulating the function of Xash3. The protein is Homeobox protein DBX1 (dbx1) of Xenopus laevis (African clawed frog).